A 450-amino-acid polypeptide reads, in one-letter code: Glucose-6-phosphate isomerase (450 aa).

The active-site Proton donor is the Glu291. Active-site residues include His312 and Lys426.

The protein belongs to the GPI family.

Its subcellular location is the cytoplasm. The enzyme catalyses alpha-D-glucose 6-phosphate = beta-D-fructose 6-phosphate. It functions in the pathway carbohydrate biosynthesis; gluconeogenesis. It participates in carbohydrate degradation; glycolysis; D-glyceraldehyde 3-phosphate and glycerone phosphate from D-glucose: step 2/4. Its function is as follows. Catalyzes the reversible isomerization of glucose-6-phosphate to fructose-6-phosphate. This Clostridium botulinum (strain Langeland / NCTC 10281 / Type F) protein is Glucose-6-phosphate isomerase.